A 591-amino-acid chain; its full sequence is Aspartate--tRNA(Asp/Asn) ligase (591 aa).

Residue Glu-175 coordinates L-aspartate. The segment at 199 to 202 (QQYK) is aspartate. Positions 221 and 450 each coordinate L-aspartate. ATP is bound at residue 221-223 (RDE). Position 484 (Glu-484) interacts with ATP. Residue Arg-491 coordinates L-aspartate. 536–539 (GVDR) provides a ligand contact to ATP.

Belongs to the class-II aminoacyl-tRNA synthetase family. Type 1 subfamily. In terms of assembly, homodimer.

It is found in the cytoplasm. It carries out the reaction tRNA(Asx) + L-aspartate + ATP = L-aspartyl-tRNA(Asx) + AMP + diphosphate. Aspartyl-tRNA synthetase with relaxed tRNA specificity since it is able to aspartylate not only its cognate tRNA(Asp) but also tRNA(Asn). Reaction proceeds in two steps: L-aspartate is first activated by ATP to form Asp-AMP and then transferred to the acceptor end of tRNA(Asp/Asn). The sequence is that of Aspartate--tRNA(Asp/Asn) ligase from Rhodopseudomonas palustris (strain TIE-1).